Consider the following 382-residue polypeptide: Sphingoid long-chain base transporter RSB1 (382 aa).

The Extracellular segment spans residues 1 to 34 (MSNATNNTLGSLLPQLEAAANSNSLYGGMVPNLR). Asparagine 3 and asparagine 6 each carry an N-linked (GlcNAc...) asparagine glycan. Residues 35–55 (FNITMIVIWGILLTIHVVQLL) traverse the membrane as a helical segment. At 56-57 (MR) the chain is on the cytoplasmic side. Residues 58–78 (QYWFSIAFICTGILEVLGFIG) form a helical membrane-spanning segment. The Extracellular segment spans residues 79–90 (RTWSHSNVADMD). The chain crosses the membrane as a helical span at residues 91 to 111 (AFLLNMICLTIAPVFTMGGIY). Over 112 to 135 (YQLAKLIEVYGHRFSLLPSPMAYS) the chain is Cytoplasmic. The chain crosses the membrane as a helical span at residues 136-156 (FIFICSDIVSLVVQAVGGGLC). Over 157-171 (GVAVTDGTSTTTGNH) the chain is Extracellular. Residues 172-192 (VFIAGLAIQVASMAIFLMLWF) traverse the membrane as a helical segment. At 193–241 (HFLFRIYISVRWEHINSRPISLSLLKISQTEVDYLYREKFHFLRLEPKR) the chain is on the cytoplasmic side. A helical membrane pass occupies residues 242-262 (WVFHYFNLAMTVAVLTIFTRC). Over 263–281 (CYRLAELVVGWDGYLITHE) the chain is Extracellular. The chain crosses the membrane as a helical span at residues 282 to 302 (WYFIILDALMMAIATVTLTIF). The Cytoplasmic portion of the chain corresponds to 303-382 (HPGFAFKGRS…LFSSKKKAKL (80 aa)).

Belongs to the lipid-translocating exporter (LTE) (TC 9.A.26.1) family.

The protein resides in the cell membrane. Functionally, catalyzes the ATP-dependent translocation of sphingoid long-chain bases (LCBs) from the cytoplasmic site toward the extracytoplasmic side of the membrane (flip-flop). Involved in the establishment of the functional lipid asymmetry of the plasma membrane. Regulates intracellular levels of LCBs, sphingolipid precursors that are growth inhibitory at increased levels. The protein is Sphingoid long-chain base transporter RSB1 (RSB1) of Saccharomyces cerevisiae (strain RM11-1a) (Baker's yeast).